Here is a 255-residue protein sequence, read N- to C-terminus: NAD kinase (255 aa).

Asp44 acts as the Proton acceptor in catalysis. NAD(+)-binding positions include 44–45 (DG), His49, 114–115 (NE), Asp144, Ala152, 155–160 (SAYNLS), and Gln216.

This sequence belongs to the NAD kinase family. A divalent metal cation serves as cofactor.

It is found in the cytoplasm. It carries out the reaction NAD(+) + ATP = ADP + NADP(+) + H(+). Involved in the regulation of the intracellular balance of NAD and NADP, and is a key enzyme in the biosynthesis of NADP. Catalyzes specifically the phosphorylation on 2'-hydroxyl of the adenosine moiety of NAD to yield NADP. The protein is NAD kinase of Rickettsia rickettsii (strain Iowa).